The primary structure comprises 71 residues: Phosphatidylinositol N-acetylglucosaminyltransferase subunit Y (71 aa).

The Cytoplasmic portion of the chain corresponds to 1 to 5 (MIRSL). Residues 6–26 (PTMTVLIPLVSLAGLLYSASV) form a helical membrane-spanning segment. The Lumenal portion of the chain corresponds to 27-44 (EEGFPEGCTSASSLCFYS). A helical membrane pass occupies residues 45 to 65 (LLLPVTVPVYVFFHLWTWMGL). At 66–71 (KLFRHN) the chain is on the cytoplasmic side.

As to quaternary structure, component of the glycosylphosphatidylinositol-N-acetylglucosaminyltransferase (GPI-GnT) complex composed at least by PIGA, PIGC, PIGH, PIGP, PIGQ, PIGY and DPM2. Interacts directly with PIGA; this interaction regulates glycosylphosphatidylinositol-N-acetylglucosaminyltransferase activity. Does not interact with Ras proteins.

The protein resides in the endoplasmic reticulum membrane. The protein operates within glycolipid biosynthesis; glycosylphosphatidylinositol-anchor biosynthesis. Its function is as follows. Part of the glycosylphosphatidylinositol-N-acetylglucosaminyltransferase (GPI-GnT) complex that catalyzes the transfer of N-acetylglucosamine from UDP-N-acetylglucosamine to phosphatidylinositol and participates in the first step of GPI biosynthesis. May act by regulating the catalytic subunit PIGA. This Mus musculus (Mouse) protein is Phosphatidylinositol N-acetylglucosaminyltransferase subunit Y.